A 164-amino-acid chain; its full sequence is Putative histone H2B type 2-D (164 aa).

Low complexity predominate over residues methionine 1–lysine 12. The segment at methionine 1–serine 33 is disordered. The residue at position 2 (proline 2) is an N-acetylproline. Lysine 6 carries the post-translational modification N6-(2-hydroxyisobutyryl)lysine; alternate. N6-(beta-hydroxybutyryl)lysine; alternate occurs at positions 6 and 12. 3 positions are modified to N6-acetyllysine; alternate: lysine 6, lysine 12, and lysine 13. Lysine 6 carries the N6-butyryllysine; alternate modification. Lysine 6, lysine 12, and lysine 13 each carry N6-crotonyllysine; alternate. Residues lysine 6 and lysine 12 each carry the N6-lactoyllysine; alternate modification. A Glycyl lysine isopeptide (Lys-Gly) (interchain with G-Cter in SUMO2); alternate cross-link involves residue lysine 6. Lysine 13 carries the post-translational modification N6-(2-hydroxyisobutyryl)lysine; alternate. Residue serine 15 is modified to Phosphoserine; by STK4/MST1. N6-acetyllysine; alternate occurs at positions 16, 17, 21, and 24. 4 positions are modified to N6-crotonyllysine; alternate: lysine 16, lysine 17, lysine 21, and lysine 24. Lysine 16, lysine 17, lysine 21, and lysine 24 each carry N6-lactoyllysine; alternate. Lysine 17 and lysine 21 each carry N6-(beta-hydroxybutyryl)lysine; alternate. At lysine 17 the chain carries N6-glutaryllysine; alternate. Residues lysine 21 and lysine 24 each carry the N6-(2-hydroxyisobutyryl)lysine; alternate modification. N6-butyryllysine; alternate is present on lysine 21. Residue lysine 21 forms a Glycyl lysine isopeptide (Lys-Gly) (interchain with G-Cter in SUMO2); alternate linkage. Lysine 25 carries the post-translational modification N6-(2-hydroxyisobutyryl)lysine. An N6-(2-hydroxyisobutyryl)lysine; alternate modification is found at lysine 35. Lysine 35 carries the N6-(beta-hydroxybutyryl)lysine; alternate modification. Lysine 35 carries the post-translational modification N6-crotonyllysine; alternate. Lysine 35 is subject to N6-glutaryllysine; alternate. Lysine 35 carries the N6-succinyllysine; alternate modification. Residue lysine 35 forms a Glycyl lysine isopeptide (Lys-Gly) (interchain with G-Cter in ubiquitin); alternate linkage. Serine 37 carries the post-translational modification Phosphoserine; by AMPK. Lysine 44, lysine 47, and lysine 58 each carry N6-(2-hydroxyisobutyryl)lysine; alternate. Lysine 44 carries the post-translational modification N6-lactoyllysine; alternate. Residues lysine 44 and lysine 47 each carry the N6-glutaryllysine; alternate modification. The residue at position 47 (lysine 47) is an N6-methyllysine; alternate. The residue at position 58 (lysine 58) is an N6,N6-dimethyllysine; alternate. A Dimethylated arginine modification is found at arginine 80. N6-(2-hydroxyisobutyryl)lysine; alternate is present on lysine 86. The residue at position 86 (lysine 86) is an N6-(beta-hydroxybutyryl)lysine; alternate. At lysine 86 the chain carries N6-acetyllysine; alternate. Residue lysine 86 is modified to N6-lactoyllysine; alternate. At lysine 86 the chain carries N6,N6,N6-trimethyllysine; alternate. An omega-N-methylarginine mark is found at arginine 87 and arginine 93. The disordered stretch occupies residues proline 111–serine 140.

It belongs to the histone H2B family. In terms of assembly, the nucleosome is a histone octamer containing two molecules each of H2A, H2B, H3 and H4 assembled in one H3-H4 heterotetramer and two H2A-H2B heterodimers. The octamer wraps approximately 147 bp of DNA. Post-translationally, phosphorylation at Ser-37 (H2BS36ph) by AMPK in response to stress promotes transcription. Phosphorylated on Ser-15 (H2BS14ph) by STK4/MST1 during apoptosis; which facilitates apoptotic chromatin condensation. Also phosphorylated on Ser-15 in response to DNA double strand breaks (DSBs), and in correlation with somatic hypermutation and immunoglobulin class-switch recombination. Crotonylation (Kcr) is specifically present in male germ cells and marks testis-specific genes in post-meiotic cells, including X-linked genes that escape sex chromosome inactivation in haploid cells. Crotonylation marks active promoters and enhancers and confers resistance to transcriptional repressors. It is also associated with post-meiotically activated genes on autosomes. In terms of processing, lactylated in macrophages by EP300/P300 by using lactoyl-CoA directly derived from endogenous or exogenous lactate, leading to stimulates gene transcription.

It is found in the nucleus. It localises to the chromosome. Its function is as follows. Core component of nucleosome. Nucleosomes wrap and compact DNA into chromatin, limiting DNA accessibility to the cellular machineries which require DNA as a template. Histones thereby play a central role in transcription regulation, DNA repair, DNA replication and chromosomal stability. DNA accessibility is regulated via a complex set of post-translational modifications of histones, also called histone code, and nucleosome remodeling. In Homo sapiens (Human), this protein is Putative histone H2B type 2-D.